A 133-amino-acid polypeptide reads, in one-letter code: Mediator of RNA polymerase II transcription subunit 10 (133 aa).

Residues 1–13 show a composition bias toward polar residues; it reads MSTEASTGETPEF. The disordered stretch occupies residues 1 to 28; sequence MSTEASTGETPEFQSYDHRGSPTQEAMK. Basic and acidic residues predominate over residues 15–28; sequence SYDHRGSPTQEAMK.

The protein belongs to the Mediator complex subunit 10 family. In terms of assembly, component of the Mediator complex.

It is found in the nucleus. In terms of biological role, component of the Mediator complex, a coactivator involved in the regulated transcription of nearly all RNA polymerase II-dependent genes. Mediator functions as a bridge to convey information from gene-specific regulatory proteins to the basal RNA polymerase II transcription machinery. Mediator is recruited to promoters by direct interactions with regulatory proteins and serves as a scaffold for the assembly of a functional preinitiation complex with RNA polymerase II and the general transcription factors. The chain is Mediator of RNA polymerase II transcription subunit 10 (NUT2) from Phaeosphaeria nodorum (strain SN15 / ATCC MYA-4574 / FGSC 10173) (Glume blotch fungus).